A 495-amino-acid polypeptide reads, in one-letter code: Dipeptide and tripeptide permease A (495 aa).

The Cytoplasmic segment spans residues 1 to 20 (MTTSALNPLRQPKPFYLIFS). The chain crosses the membrane as a helical span at residues 21–41 (IEFWERFGFYGLQGILAVYLV). Over 42–51 (KALGLREADS) the chain is Periplasmic. Residues 52–72 (FTLFSSFIALVYGLIAVGGWL) traverse the membrane as a helical segment. Residues 73-81 (GDKVLGTKR) lie on the Cytoplasmic side of the membrane. The next 2 membrane-spanning stretches (helical) occupy residues 82 to 102 (TILL…ASSE) and 103 to 123 (HISL…LFKA). Residues 124 to 145 (NPSSLLSKCYEENDPRLDGAFT) lie on the Periplasmic side of the membrane. A helical transmembrane segment spans residues 146–166 (MYYMAINIGSLLSMLATPWLA). The Cytoplasmic portion of the chain corresponds to 167–171 (DQFGY). The chain crosses the membrane as a helical span at residues 172–192 (AHAFALSVVGMLITVANFILM). The Periplasmic segment spans residues 193 to 209 (QGWVKNYGSDADFRTPR). Residues 210–230 (LSTWLAVLAGVVAACAAAALL) traverse the membrane as a helical segment. Residues 231–232 (LK) are Cytoplasmic-facing. The helical transmembrane segment at 233–253 (HEIIANVVLAVLSIGVVGLYV) threads the bilayer. At 254 to 266 (KETLLLKGAERKK) the chain is on the periplasmic side. Residues 267–287 (MIVAAILMLQATVFFVLYNQM) form a helical membrane-spanning segment. The Cytoplasmic portion of the chain corresponds to 288–312 (PLSLNFFAIHNTEHMLFGIPVQPEQ). A helical transmembrane segment spans residues 313 to 333 (FQSLNPFWIMLASPLLALCYN). At 334–344 (KLGNRLPMPHK) the chain is on the periplasmic side. Residues 345–365 (FAIGMVLCAGAFLVLPLGAKY) form a helical membrane-spanning segment. Topologically, residues 366 to 375 (ANAQGLVSSN) are cytoplasmic. A helical transmembrane segment spans residues 376 to 396 (WMVLSYLLQSVGELLISGLGL). Over 397 to 409 (AMVAQLVPQRLMG) the chain is Periplasmic. Residues 410-430 (FIMGAWFLTSAASSVIAGWVA) form a helical membrane-spanning segment. Residues 431–451 (GLTAAPDNVTNPLATLEIYSR) are Cytoplasmic-facing. The chain crosses the membrane as a helical span at residues 452–472 (VFTQIGVVTGVIAVVTIIIAP). Residues 473–495 (WLHRMTLDEKPAHPEHEMALDAR) lie on the Periplasmic side of the membrane.

This sequence belongs to the major facilitator superfamily. Proton-dependent oligopeptide transporter (POT/PTR) (TC 2.A.17) family. DtpA subfamily.

It localises to the cell inner membrane. Functionally, proton-dependent permease that transports di- and tripeptides. The sequence is that of Dipeptide and tripeptide permease A from Chromobacterium violaceum (strain ATCC 12472 / DSM 30191 / JCM 1249 / CCUG 213 / NBRC 12614 / NCIMB 9131 / NCTC 9757 / MK).